A 123-amino-acid polypeptide reads, in one-letter code: Large ribosomal subunit protein uL29 (123 aa).

This sequence belongs to the universal ribosomal protein uL29 family.

This is Large ribosomal subunit protein uL29 (RPL35) from Theileria lestoquardi.